Consider the following 404-residue polypeptide: Chorismate synthase (404 aa).

NADP(+) contacts are provided by arginine 40 and arginine 46. Residues 135 to 137 (RAS), 256 to 257 (QA), glycine 300, 315 to 319 (KPIST), and arginine 341 each bind FMN.

The protein belongs to the chorismate synthase family. In terms of assembly, homotetramer. The cofactor is FMNH2.

It carries out the reaction 5-O-(1-carboxyvinyl)-3-phosphoshikimate = chorismate + phosphate. Its pathway is metabolic intermediate biosynthesis; chorismate biosynthesis; chorismate from D-erythrose 4-phosphate and phosphoenolpyruvate: step 7/7. Catalyzes the anti-1,4-elimination of the C-3 phosphate and the C-6 proR hydrogen from 5-enolpyruvylshikimate-3-phosphate (EPSP) to yield chorismate, which is the branch point compound that serves as the starting substrate for the three terminal pathways of aromatic amino acid biosynthesis. This reaction introduces a second double bond into the aromatic ring system. This is Chorismate synthase from Mycobacterium sp. (strain JLS).